Consider the following 373-residue polypeptide: MNENCYKRVVIKLGTSLLTGGTGKLDHERMADLCRQIAELTRLGTEIVIVSSGAIAAGRSKMGIRHIPKDVPFKQVLAAIGQSQLMNYYDQLFSPHGLTVAQGLLTKSDLSDRSGYLNARNTLLALMELGIITIVNENDVVAIDEIQQAKFGDNDNLSAMVANLIEADLLLILTNIRGLYTSDPTLHPEATLITEVKEITEELEQLAAGSSNKLGTGGMVTKLEAARLATSSGVTAIIADGHIPDIILKLANGENEGTRFIPSLHKPDSRQRWMMSGLCTRGSICVDDGAAKALRENQKSLLAAGVQQAEGKFGRGDIVKLTDSHGKRLGYGITNYSSDDISKIKGLHSQELNAVLGGNQGPEVIHRNNLVVI.

Lys12 serves as a coordination point for ATP. Substrate-binding residues include Ser52, Asp139, and Asn154. Residue 216-222 (TGGMVTK) participates in ATP binding. Residues 281–359 (RGSICVDDGA…QELNAVLGGN (79 aa)) form the PUA domain.

It belongs to the glutamate 5-kinase family.

The protein resides in the cytoplasm. It catalyses the reaction L-glutamate + ATP = L-glutamyl 5-phosphate + ADP. Its pathway is amino-acid biosynthesis; L-proline biosynthesis; L-glutamate 5-semialdehyde from L-glutamate: step 1/2. In terms of biological role, catalyzes the transfer of a phosphate group to glutamate to form L-glutamate 5-phosphate. The polypeptide is Glutamate 5-kinase (Dehalococcoides mccartyi (strain CBDB1)).